Reading from the N-terminus, the 185-residue chain is Ribosome-recycling factor (185 aa).

Belongs to the RRF family.

The protein localises to the cytoplasm. Functionally, responsible for the release of ribosomes from messenger RNA at the termination of protein biosynthesis. May increase the efficiency of translation by recycling ribosomes from one round of translation to another. This Actinobacillus succinogenes (strain ATCC 55618 / DSM 22257 / CCUG 43843 / 130Z) protein is Ribosome-recycling factor.